Consider the following 220-residue polypeptide: ATP-dependent dethiobiotin synthetase BioD (220 aa).

An ATP-binding site is contributed by G11–F16. T15 provides a ligand contact to Mg(2+). Residue K36 is part of the active site. Residue T40 participates in substrate binding. ATP is bound by residues D48 and E107–G110. Mg(2+) is bound by residues D48 and E107.

It belongs to the dethiobiotin synthetase family. As to quaternary structure, homodimer. Mg(2+) is required as a cofactor.

The protein localises to the cytoplasm. The catalysed reaction is (7R,8S)-7,8-diammoniononanoate + CO2 + ATP = (4R,5S)-dethiobiotin + ADP + phosphate + 3 H(+). The protein operates within cofactor biosynthesis; biotin biosynthesis; biotin from 7,8-diaminononanoate: step 1/2. Its function is as follows. Catalyzes a mechanistically unusual reaction, the ATP-dependent insertion of CO2 between the N7 and N8 nitrogen atoms of 7,8-diaminopelargonic acid (DAPA, also called 7,8-diammoniononanoate) to form a ureido ring. This Aquifex aeolicus (strain VF5) protein is ATP-dependent dethiobiotin synthetase BioD.